We begin with the raw amino-acid sequence, 374 residues long: dTDP-3-amino-3,4,6-trideoxy-alpha-D-glucose transaminase (374 aa).

Pyridoxal 5'-phosphate is bound by residues glycine 60, glutamine 160, 181 to 186 (SFYPTK), tyrosine 214, tyrosine 221, 229 to 231 (NSR), and tyrosine 316. An N6-(pyridoxal phosphate)lysine modification is found at lysine 186.

Belongs to the degT/dnrJ/eryC1 family. Requires pyridoxal 5'-phosphate as cofactor.

It carries out the reaction dTDP-3-amino-3,4,6-trideoxy-alpha-D-glucose + 2-oxoglutarate = dTDP-3-dehydro-4,6-dideoxy-alpha-D-glucose + L-glutamate. The protein operates within antibiotic biosynthesis. Functionally, involved in the biosynthesis of the amino sugar dTDP-L-megosamine which is found in the macrolide antibiotic and antiparasitic megalomicin A. Catalyzes the reversible transfer of the amino group from L-glutamate to the C-3 position of dTDP-3-keto-4,6-deoxyglucose to yield dTDP-3-amino-3,4,6-trideoxyglucose. The sequence is that of dTDP-3-amino-3,4,6-trideoxy-alpha-D-glucose transaminase from Micromonospora megalomicea subsp. nigra.